We begin with the raw amino-acid sequence, 74 residues long: Antitoxin VapB39 (74 aa).

Antitoxin component of a type II toxin-antitoxin (TA) system. In Mycobacterium tuberculosis (strain CDC 1551 / Oshkosh), this protein is Antitoxin VapB39 (vapB39).